We begin with the raw amino-acid sequence, 227 residues long: Cytochrome c oxidase subunit 2 (227 aa).

At 1–14 the chain is on the mitochondrial intermembrane side; sequence MAYPLQLGFQDASS. A helical transmembrane segment spans residues 15–45; that stretch reads PIMEELLHFHDHTLMIVFLISSLVLYIISLM. Topologically, residues 46-59 are mitochondrial matrix; it reads LTTKLTHTSTMDAQ. A helical transmembrane segment spans residues 60–87; the sequence is EVETIWTILPAIILILIALPSLRILYMM. Residues 88-227 lie on the Mitochondrial intermembrane side of the membrane; sequence DEINNPSLTV…HFENWTTTML (140 aa). Residues His161, Cys196, Glu198, Cys200, His204, and Met207 each coordinate Cu cation. Glu198 is a binding site for Mg(2+).

The protein belongs to the cytochrome c oxidase subunit 2 family. In terms of assembly, component of the cytochrome c oxidase (complex IV, CIV), a multisubunit enzyme composed of 14 subunits. The complex is composed of a catalytic core of 3 subunits MT-CO1, MT-CO2 and MT-CO3, encoded in the mitochondrial DNA, and 11 supernumerary subunits COX4I, COX5A, COX5B, COX6A, COX6B, COX6C, COX7A, COX7B, COX7C, COX8 and NDUFA4, which are encoded in the nuclear genome. The complex exists as a monomer or a dimer and forms supercomplexes (SCs) in the inner mitochondrial membrane with NADH-ubiquinone oxidoreductase (complex I, CI) and ubiquinol-cytochrome c oxidoreductase (cytochrome b-c1 complex, complex III, CIII), resulting in different assemblies (supercomplex SCI(1)III(2)IV(1) and megacomplex MCI(2)III(2)IV(2)). Found in a complex with TMEM177, COA6, COX18, COX20, SCO1 and SCO2. Interacts with TMEM177 in a COX20-dependent manner. Interacts with COX20. Interacts with COX16. Cu cation is required as a cofactor.

The protein resides in the mitochondrion inner membrane. The catalysed reaction is 4 Fe(II)-[cytochrome c] + O2 + 8 H(+)(in) = 4 Fe(III)-[cytochrome c] + 2 H2O + 4 H(+)(out). Functionally, component of the cytochrome c oxidase, the last enzyme in the mitochondrial electron transport chain which drives oxidative phosphorylation. The respiratory chain contains 3 multisubunit complexes succinate dehydrogenase (complex II, CII), ubiquinol-cytochrome c oxidoreductase (cytochrome b-c1 complex, complex III, CIII) and cytochrome c oxidase (complex IV, CIV), that cooperate to transfer electrons derived from NADH and succinate to molecular oxygen, creating an electrochemical gradient over the inner membrane that drives transmembrane transport and the ATP synthase. Cytochrome c oxidase is the component of the respiratory chain that catalyzes the reduction of oxygen to water. Electrons originating from reduced cytochrome c in the intermembrane space (IMS) are transferred via the dinuclear copper A center (CU(A)) of subunit 2 and heme A of subunit 1 to the active site in subunit 1, a binuclear center (BNC) formed by heme A3 and copper B (CU(B)). The BNC reduces molecular oxygen to 2 water molecules using 4 electrons from cytochrome c in the IMS and 4 protons from the mitochondrial matrix. The protein is Cytochrome c oxidase subunit 2 (MT-CO2) of Tupaia glis (Common tree shrew).